Consider the following 411-residue polypeptide: Lissencephaly-1 homolog (411 aa).

Residues 9–41 (QREELNQAIADYLGSNGYADSLEAFRKEADLST) form the LisH domain. Residues 56–83 (TSVIRLQKKVMELEAKLTEAEKEVIEGA) adopt a coiled-coil conformation. WD repeat units lie at residues 106-147 (GHRA…RSLK), 148-187 (GHTD…ECVK), 191-230 (GHDH…CVKT), 233-272 (GHRE…CKVE), 275-334 (DHEH…CLFT), 337-376 (GHDN…CMKT), and 379-411 (AHQH…WECR).

It belongs to the WD repeat LIS1/nudF family.

It localises to the cytoplasm. The protein localises to the cytoskeleton. The protein resides in the microtubule organizing center. Its subcellular location is the centrosome. Its function is as follows. Positively regulates the activity of the minus-end directed microtubule motor protein dynein. May enhance dynein-mediated microtubule sliding by targeting dynein to the microtubule plus end. Required for several dynein- and microtubule-dependent processes. In Drosophila ananassae (Fruit fly), this protein is Lissencephaly-1 homolog.